A 252-amino-acid chain; its full sequence is Uridylate kinase (252 aa).

23 to 26 is an ATP binding site; sequence KLSG. Residue glycine 65 coordinates UMP. 2 residues coordinate ATP: glycine 66 and arginine 70. Residues aspartate 85 and 146-153 each bind UMP; that span reads LGAPFFST. Positions 173, 174, 179, and 182 each coordinate ATP.

The protein belongs to the UMP kinase family. Homohexamer.

The protein localises to the cytoplasm. It carries out the reaction UMP + ATP = UDP + ADP. It functions in the pathway pyrimidine metabolism; CTP biosynthesis via de novo pathway; UDP from UMP (UMPK route): step 1/1. With respect to regulation, inhibited by UTP. In terms of biological role, catalyzes the reversible phosphorylation of UMP to UDP. The sequence is that of Uridylate kinase from Thermobifida fusca (strain YX).